A 440-amino-acid polypeptide reads, in one-letter code: Transposon TyH3 Gag polyprotein (440 aa).

Polar residues-rich tracts occupy residues 1 to 23, 48 to 60, and 127 to 152; these read MESQ…SVTS, TKAN…TPAS, and QSQF…GNTF. Disordered regions lie at residues 1–93, 126–173, and 352–440; these read MESQ…MMTQ, PQSQ…RPPP, and GSRN…PETY. The segment covering 153–165 has biased composition (low complexity); that stretch reads TDSSSADSDMTST. The interval 299–401 is RNA-binding; the sequence is NNGIHINNKV…NSKSKTARAH (103 aa). Over residues 402–418 the composition is skewed to low complexity; that stretch reads NVSTSNNSPSTDNDSIS. At serine 416 the chain carries Phosphoserine. Residues 419–428 show a composition bias toward polar residues; it reads KSTTEPIQLN. The segment covering 429-440 has biased composition (basic and acidic residues); sequence NKHDLHLRPETY.

As to quaternary structure, homotrimer.

It is found in the cytoplasm. In terms of biological role, capsid protein (CA) is the structural component of the virus-like particle (VLP), forming the shell that encapsulates the retrotransposons dimeric RNA genome. The particles are assembled from trimer-clustered units and there are holes in the capsid shells that allow for the diffusion of macromolecules. CA also has nucleocapsid-like chaperone activity, promoting primer tRNA(i)-Met annealing to the multipartite primer-binding site (PBS), dimerization of Ty1 RNA and initiation of reverse transcription. The chain is Transposon TyH3 Gag polyprotein (TY1A) from Saccharomyces cerevisiae (Baker's yeast).